A 498-amino-acid chain; its full sequence is UDP-N-acetylmuramate--L-alanine ligase (498 aa).

Position 122 to 128 (122 to 128 (GTHGKTS)) interacts with ATP.

Belongs to the MurCDEF family.

It localises to the cytoplasm. It catalyses the reaction UDP-N-acetyl-alpha-D-muramate + L-alanine + ATP = UDP-N-acetyl-alpha-D-muramoyl-L-alanine + ADP + phosphate + H(+). It participates in cell wall biogenesis; peptidoglycan biosynthesis. In terms of biological role, cell wall formation. In Corynebacterium jeikeium (strain K411), this protein is UDP-N-acetylmuramate--L-alanine ligase.